Here is a 1012-residue protein sequence, read N- to C-terminus: Alanine--tRNA ligase, mitochondrial (1012 aa).

The N-terminal 24 residues, 1–24 (MYNSAKQLQRVLTAREIRKTFLDH), are a transit peptide targeting the mitochondrion. Zn(2+) contacts are provided by histidine 656, histidine 660, cysteine 766, and histidine 770.

It belongs to the class-II aminoacyl-tRNA synthetase family. In terms of assembly, monomer. It depends on Zn(2+) as a cofactor.

It localises to the mitochondrion. The enzyme catalyses tRNA(Ala) + L-alanine + ATP = L-alanyl-tRNA(Ala) + AMP + diphosphate. In terms of biological role, catalyzes the attachment of alanine to tRNA(Ala) in a two-step reaction: alanine is first activated by ATP to form Ala-AMP and then transferred to the acceptor end of tRNA(Ala). Also edits incorrectly charged tRNA(Ala) via its editing domain. The protein is Alanine--tRNA ligase, mitochondrial of Drosophila melanogaster (Fruit fly).